The primary structure comprises 355 residues: Ribosomal RNA large subunit methyltransferase M (355 aa).

S-adenosyl-L-methionine-binding positions include S183, S216–G219, D235, D255, and D271. The active-site Proton acceptor is the K300.

It belongs to the class I-like SAM-binding methyltransferase superfamily. RNA methyltransferase RlmE family. RlmM subfamily. Monomer.

It is found in the cytoplasm. The catalysed reaction is cytidine(2498) in 23S rRNA + S-adenosyl-L-methionine = 2'-O-methylcytidine(2498) in 23S rRNA + S-adenosyl-L-homocysteine + H(+). Its function is as follows. Catalyzes the 2'-O-methylation at nucleotide C2498 in 23S rRNA. This is Ribosomal RNA large subunit methyltransferase M from Pseudomonas putida (strain W619).